Here is a 393-residue protein sequence, read N- to C-terminus: Acetylornithine aminotransferase (393 aa).

Pyridoxal 5'-phosphate contacts are provided by residues 102–103 (GA) and F136. R139 serves as a coordination point for N(2)-acetyl-L-ornithine. Pyridoxal 5'-phosphate is bound at residue 219-222 (DEVQ). N6-(pyridoxal phosphate)lysine is present on K248. S274 serves as a coordination point for N(2)-acetyl-L-ornithine. T275 contributes to the pyridoxal 5'-phosphate binding site.

This sequence belongs to the class-III pyridoxal-phosphate-dependent aminotransferase family. ArgD subfamily. As to quaternary structure, homodimer. The cofactor is pyridoxal 5'-phosphate.

Its subcellular location is the cytoplasm. The enzyme catalyses N(2)-acetyl-L-ornithine + 2-oxoglutarate = N-acetyl-L-glutamate 5-semialdehyde + L-glutamate. Its pathway is amino-acid biosynthesis; L-arginine biosynthesis; N(2)-acetyl-L-ornithine from L-glutamate: step 4/4. In Wolinella succinogenes (strain ATCC 29543 / DSM 1740 / CCUG 13145 / JCM 31913 / LMG 7466 / NCTC 11488 / FDC 602W) (Vibrio succinogenes), this protein is Acetylornithine aminotransferase.